The sequence spans 267 residues: Small ribosomal subunit protein uS2 (267 aa).

The segment at 224–267 (GRQGEDQVDEKTFEGQKSEAAEGDKKTADNSMEDIVNAVEGDNK) is disordered. The segment covering 225–251 (RQGEDQVDEKTFEGQKSEAAEGDKKTA) has biased composition (basic and acidic residues).

It belongs to the universal ribosomal protein uS2 family.

The chain is Small ribosomal subunit protein uS2 from Levilactobacillus brevis (strain ATCC 367 / BCRC 12310 / CIP 105137 / JCM 1170 / LMG 11437 / NCIMB 947 / NCTC 947) (Lactobacillus brevis).